We begin with the raw amino-acid sequence, 463 residues long: MTTETRSLYSQLPAIDRLLRDSSFLSLRDTYGHTRVVELLRQMLDEAREVIRGSQTLPAWCENWAQEVDARLTKEAQSALRPVINLTGTVLHTNLGRALQAEAAVEAVAQAMRSPVTLEYDLDDAGRGHRDRALAQLLCRITGAEDACIVNNNAAAVLLMLAATASGKEVVVSRGELVEIGGAFRIPDVMRQAGCTLHEVGTTNRTHANDYRQAVNENTALLMKVHTSNYSIQGFTKAIDESELVALGKELDVPVVTDLGSGSLVDLSQYGLPKEPMPQELIAAGVSLVSFSGDKLLGGPQAGIIVGKKEMIARLQSHPLKRALRADKMTLAALEATLRLYLHPEALSEKLPTLRLLTRSAEVIQIQAQRLQAPLAAHYGAEFAVQVMPCLSQIGSGSLPVDRLPSAALTFTPHDGRGSHLESLAARWRELPVPVIGRIYDGRLWLDLRCLEDEQRFLEMLLK.

Lysine 295 carries the N6-(pyridoxal phosphate)lysine modification.

Belongs to the SelA family. As to quaternary structure, homodecamer; pentamer of dimers. Binds only one seryl-tRNA(Sec) per dimer. Pyridoxal 5'-phosphate serves as cofactor.

The protein resides in the cytoplasm. It catalyses the reaction L-seryl-tRNA(Sec) + selenophosphate + H(+) = L-selenocysteinyl-tRNA(Sec) + phosphate. Its pathway is aminoacyl-tRNA biosynthesis; selenocysteinyl-tRNA(Sec) biosynthesis; selenocysteinyl-tRNA(Sec) from L-seryl-tRNA(Sec) (bacterial route): step 1/1. Functionally, converts seryl-tRNA(Sec) to selenocysteinyl-tRNA(Sec) required for selenoprotein biosynthesis. The protein is L-seryl-tRNA(Sec) selenium transferase of Escherichia coli O139:H28 (strain E24377A / ETEC).